A 1560-amino-acid polypeptide reads, in one-letter code: Lysine-specific demethylase 5C (1560 aa).

The 42-residue stretch at 14–55 (CPVFEPSWAEFRDPLGYIAKIRPIAEKSGICKIRPPADWQPP) folds into the JmjN domain. The 91-residue stretch at 79–169 (TRVKLNYLDQ…IVYPYEMYQS (91 aa)) folds into the ARID domain. Polar residues predominate over residues 197 to 207 (LRQSVQPSKFN). Positions 197–227 (LRQSVQPSKFNSYGRRAKRLQPDPEPTEEDI) are disordered. Residues K205, K229, K244, and K274 each participate in a glycyl lysine isopeptide (Lys-Gly) (interchain with G-Cter in SUMO2) cross-link. Position 287 is a phosphoserine (S287). K295 is covalently cross-linked (Glycyl lysine isopeptide (Lys-Gly) (interchain with G-Cter in SUMO2)). Phosphoserine occurs at positions 301 and 317. The PHD-type 1 zinc-finger motif lies at 326–372 (VCRMCSRGDEDDKLLLCDGCDDNYHIFCLLPPLPEIPKGVWRCPKCV). Y440 contributes to the 2-oxoglutarate binding site. A JmjC domain is found at 468 to 634 (EYATSGWNLN…AGRQCIEHYR (167 aa)). H514 and E516 together coordinate Fe cation. Residues S522, N524, and K532 each contribute to the 2-oxoglutarate site. H602 contributes to the Fe cation binding site. A C5HC2 zinc finger spans residues 707-759 (CIKCKTTCFLSALACYDCPDGLVCLSHINDLCKCSSSRQYLRYRYTLDELPAM). Phosphoserine occurs at positions 893 and 897. Residue K1127 forms a Glycyl lysine isopeptide (Lys-Gly) (interchain with G-Cter in SUMO2) linkage. The tract at residues 1161–1181 (ILQLRRTNSAKPSPLASSSTA) is disordered. The segment covering 1169-1181 (SAKPSPLASSSTA) has biased composition (low complexity). The segment at 1187-1248 (ICVCGQVLAG…DTKFLCPLCM (62 aa)) adopts a PHD-type 2 zinc-finger fold. Disordered stretches follow at residues 1316 to 1371 (QAEP…GSGK) and 1444 to 1560 (ERHG…QQQL). Over residues 1335-1345 (PLREGSGKDMP) the composition is skewed to basic and acidic residues. S1359 carries the post-translational modification Phosphoserine. The segment covering 1448-1463 (SRARGRALERRRRRKV) has biased composition (basic residues). Residues 1464 to 1481 (DRGGEGDDPAREELEPKR) show a composition bias toward basic and acidic residues. Acidic residues predominate over residues 1488–1503 (EAEEVQEEEELEEETG). Polar residues predominate over residues 1516–1544 (SPSTQENQNGLEPAEGTTSGPSAPFSTLT).

Belongs to the JARID1 histone demethylase family. As to quaternary structure, part of two distinct complexes, one containing E2F6, and the other containing REST. Interacts with ZMYND8. Requires Fe(2+) as cofactor. Expressed in all tissues examined. Highest levels found in brain and skeletal muscle.

It localises to the nucleus. It catalyses the reaction N(6),N(6),N(6)-trimethyl-L-lysyl(4)-[histone H3] + 3 2-oxoglutarate + 3 O2 = L-lysyl(4)-[histone H3] + 3 formaldehyde + 3 succinate + 3 CO2. With respect to regulation, the inhibitor KDOAM-25 and others inhibit its demethylase activity, resulting to cell cycle arrest in myeloma cells. Functionally, histone demethylase that specifically demethylates 'Lys-4' of histone H3, thereby playing a central role in histone code. Does not demethylate histone H3 'Lys-9', H3 'Lys-27', H3 'Lys-36', H3 'Lys-79' or H4 'Lys-20'. Demethylates trimethylated and dimethylated but not monomethylated H3 'Lys-4'. Participates in transcriptional repression of neuronal genes by recruiting histone deacetylases and REST at neuron-restrictive silencer elements. Represses the CLOCK-BMAL1 heterodimer-mediated transcriptional activation of the core clock component PER2. The chain is Lysine-specific demethylase 5C from Homo sapiens (Human).